The following is a 457-amino-acid chain: Multidrug resistance protein MdtK (457 aa).

The Cytoplasmic portion of the chain corresponds to 1-10 (MQKYISEARL). The helical transmembrane segment at 11–31 (LLALAIPVILAQIAQTAMGFV) threads the bilayer. Over 32–52 (DTVMAGGYSATDMAAVAIGTS) the chain is Periplasmic. The chain crosses the membrane as a helical span at residues 53–73 (IWLPAILFGHGLLLALTPVIA). Topologically, residues 74–92 (QLNGSGRRERIAHQVRQGF) are cytoplasmic. A helical transmembrane segment spans residues 93–113 (WLAGFVSVLIMLVLWNAGYII). Residues 114 to 126 (RSMENIDPALADK) lie on the Periplasmic side of the membrane. The helical transmembrane segment at 127–147 (AVGYLRALLWGAPGYLFFQVA) threads the bilayer. Residues 148–159 (RNQCEGLAKTKP) lie on the Cytoplasmic side of the membrane. Residues 160–180 (GMVMGFIGLLVNIPVNYIFIY) traverse the membrane as a helical segment. At 181 to 188 (GHFGMPEL) the chain is on the periplasmic side. Residues 189-209 (GGVGCGVATAAVYWVMFLAMV) traverse the membrane as a helical segment. The Cytoplasmic segment spans residues 210–242 (SYIKRARSMRDIRNEKGTAKPDPAVMKRLIQLG). A helical membrane pass occupies residues 243–263 (LPIALALFFEVTLFAVVALLV). Residues 264–275 (SPLGIVDVAGHQ) are Periplasmic-facing. The helical transmembrane segment at 276–296 (IALNFSSLMFVLPMSLAAAVT) threads the bilayer. Topologically, residues 297 to 313 (IRVGYRLGQGSTLDAQT) are cytoplasmic. Residues 314 to 334 (AARTGLMVGVCMATLTAIFTV) form a helical membrane-spanning segment. Residues 335–349 (SLREQIALLYNDNPE) are Periplasmic-facing. The chain crosses the membrane as a helical span at residues 350 to 370 (VVTLAAHLMLLAAVYQISDSI). Over 371 to 386 (QVIGSGILRGYKDTRS) the chain is Cytoplasmic. The helical transmembrane segment at 387–407 (IFYITFTAYWVLGLPSGYILA) threads the bilayer. The Periplasmic segment spans residues 408–417 (LTDLVVEPMG). Residues 418–438 (PAGFWIGFIIGLTSAAIMMML) traverse the membrane as a helical segment. Over 439–457 (RMRFLQRMPSAIILQRASR) the chain is Cytoplasmic.

It belongs to the multi antimicrobial extrusion (MATE) (TC 2.A.66.1) family. MdtK subfamily.

Its subcellular location is the cell inner membrane. Functionally, multidrug efflux pump that functions probably as a Na(+)/drug antiporter. This Shigella boydii serotype 4 (strain Sb227) protein is Multidrug resistance protein MdtK.